The chain runs to 140 residues: Mediator of RNA polymerase II transcription subunit 21 (140 aa).

Positions 52–130 form a coiled coil; the sequence is EERERTLEEL…CDELILKLAQ (79 aa).

The protein belongs to the Mediator complex subunit 21 family. Component of the Mediator complex.

It is found in the nucleus. Its function is as follows. Component of the Mediator complex, a coactivator involved in the regulated transcription of nearly all RNA polymerase II-dependent genes. Mediator functions as a bridge to convey information from gene-specific regulatory proteins to the basal RNA polymerase II transcription machinery. Mediator is recruited to promoters by direct interactions with regulatory proteins and serves as a scaffold for the assembly of a functional preinitiation complex with RNA polymerase II and the general transcription factors. The chain is Mediator of RNA polymerase II transcription subunit 21 (SRB7) from Yarrowia lipolytica (strain CLIB 122 / E 150) (Yeast).